A 374-amino-acid chain; its full sequence is 1,3,6,8-tetrahydroxynaphthalene synthase (374 aa).

Cys138 is a catalytic residue.

It belongs to the thiolase-like superfamily. Chalcone/stilbene synthases family. As to quaternary structure, homodimer.

It catalyses the reaction 5 malonyl-CoA + 5 H(+) = naphthalene-1,3,6,8-tetrol + 5 CO2 + 5 CoA + H2O. It participates in pigment biosynthesis; melanin biosynthesis. Involved in the biosynthesis of melanin but also various secondary metabolites containing a naphthoquinone ring. Catalyzes the iterative condensation of five CoA-linked malonyl units to form a pentaketide intermediate. THNS subsequently catalyzes the dual intramolecular Claisen and aldol condensations of this linear intermediate to produce the fused ring of 1,3,6,8-tetrahydroxynaphthalene (THN). The protein is 1,3,6,8-tetrahydroxynaphthalene synthase of Streptomyces coelicolor (strain ATCC BAA-471 / A3(2) / M145).